A 425-amino-acid polypeptide reads, in one-letter code: Melibiose permease (425 aa).

The Cytoplasmic portion of the chain corresponds to 1 to 13 (MNTTTCTHKDNPN). The helical transmembrane segment at 14–34 (FWIFGLFFFLYFFIMATCFPF) threads the bilayer. Residues 35–50 (LPIWLSDIIGLNKTHT) lie on the Periplasmic side of the membrane. The chain crosses the membrane as a helical span at residues 51–71 (GIVFSCISLSAIAFQPVLGVI). At 72–80 (SDKLGLKKH) the chain is on the cytoplasmic side. The chain crosses the membrane as a helical span at residues 81–101 (LLWIISVLLFLFAPFFLYVFA). Topologically, residues 102-107 (PLLKTN) are periplasmic. The chain crosses the membrane as a helical span at residues 108-128 (IWLGALSGGLYIGFVFSAGSG). At 129–149 (AIEAYIERVSRNSAFEYGKAR) the chain is on the cytoplasmic side. A helical membrane pass occupies residues 150 to 170 (MFGCLGWGLCASTGGILFGID). Proline 171 is a topological domain (periplasmic). Residues 172-192 (SYVFWMGSAAALLLMLLLVVA) traverse the membrane as a helical segment. The Cytoplasmic portion of the chain corresponds to 193–227 (KPKPNQTAQVMNALGANQPQITAKKVFNLFRQRRM). A helical transmembrane segment spans residues 228 to 248 (WMFILYVIGVACVYDVFDQQF). Residues 249 to 267 (ATFFKTFFATPQEGTRAFG) are Periplasmic-facing. The helical transmembrane segment at 268–288 (FATTAGEICNAIIMFCSPWII) threads the bilayer. At 289–297 (NRIGAKNTL) the chain is on the cytoplasmic side. A helical membrane pass occupies residues 298 to 318 (LIAGLIMATRIIGSSFATTAV). Residues 319 to 325 (EVIALKM) lie on the Periplasmic side of the membrane. A helical membrane pass occupies residues 326 to 346 (LHALEVPFLLVGAFKYITGVF). Topologically, residues 347–353 (DTRLSAT) are cytoplasmic. The helical transmembrane segment at 354 to 374 (IYLIGFQFAKQSAAIFLSAFA) threads the bilayer. Over 375–385 (GNMYDRIGFQE) the chain is Periplasmic. A helical membrane pass occupies residues 386 to 406 (TYLMLGCFVLAITVVSAFTLS). Residues 407–425 (SRQEIAAAAGAAALTSQSR) lie on the Cytoplasmic side of the membrane.

This sequence belongs to the major facilitator superfamily. Oligosaccharide:H(+) symporter (OHS) (TC 2.A.1.5) family.

It is found in the cell inner membrane. Responsible for transport of melibiose into the cell, with the concomitant import of a proton (symport system). Can also transport lactose, and has weak activity with maltose. Cannot transport the analog methyl-1-thio-beta,D-galactopyranoside (TMG). The chain is Melibiose permease from Enterobacter cloacae subsp. cloacae (strain ATCC 13047 / DSM 30054 / NBRC 13535 / NCTC 10005 / WDCM 00083 / NCDC 279-56).